The following is a 111-amino-acid chain: Large ribosomal subunit protein uL22 (111 aa).

It belongs to the universal ribosomal protein uL22 family. In terms of assembly, part of the 50S ribosomal subunit.

In terms of biological role, this protein binds specifically to 23S rRNA; its binding is stimulated by other ribosomal proteins, e.g. L4, L17, and L20. It is important during the early stages of 50S assembly. It makes multiple contacts with different domains of the 23S rRNA in the assembled 50S subunit and ribosome. Functionally, the globular domain of the protein is located near the polypeptide exit tunnel on the outside of the subunit, while an extended beta-hairpin is found that lines the wall of the exit tunnel in the center of the 70S ribosome. The polypeptide is Large ribosomal subunit protein uL22 (Chlamydia pneumoniae (Chlamydophila pneumoniae)).